Reading from the N-terminus, the 337-residue chain is Adenosine deaminase (337 aa).

Zn(2+) is bound by residues H15 and H17. Residues H17, D19, and G172 each contribute to the substrate site. H199 lines the Zn(2+) pocket. Residue E202 is the Proton donor of the active site. D279 contributes to the Zn(2+) binding site.

The protein belongs to the metallo-dependent hydrolases superfamily. Adenosine and AMP deaminases family. Adenosine deaminase subfamily. Zn(2+) serves as cofactor.

It catalyses the reaction adenosine + H2O + H(+) = inosine + NH4(+). It carries out the reaction 2'-deoxyadenosine + H2O + H(+) = 2'-deoxyinosine + NH4(+). In terms of biological role, catalyzes the hydrolytic deamination of adenosine and 2-deoxyadenosine. The sequence is that of Adenosine deaminase from Enterococcus faecalis (strain ATCC 700802 / V583).